The primary structure comprises 145 residues: Selenoprotein M (145 aa).

The N-terminal stretch at 1 to 23 (MSLLLPPLALLLLLAALVAPATA) is a signal peptide. Active-site nucleophile residues include C45 and U48. A cross-link (cysteinyl-selenocysteine (Cys-Sec)) is located at residues 45–48 (CGGU). Position 48 (U48) is a non-standard amino acid, selenocysteine.

This sequence belongs to the selenoprotein M/F family. Widely expressed.

Its subcellular location is the cytoplasm. It localises to the perinuclear region. The protein localises to the endoplasmic reticulum. It is found in the golgi apparatus. May function as a thiol-disulfide oxidoreductase that participates in disulfide bond formation. The chain is Selenoprotein M from Homo sapiens (Human).